We begin with the raw amino-acid sequence, 161 residues long: DNA-binding protein inhibitor ID-4 (161 aa).

Residues 52–104 (AAEAAADEPALCLQCDMNDCYSRLRRLVPTIPPNKKVSKVEILPHVIDYILDL) enclose the bHLH domain. A disordered region spans residues 116–161 (RQPPPPAPPHHPAGTCPAAPPRTPLTALNTDPAGAVNKQGDSILCR). The segment covering 117 to 126 (QPPPPAPPHH) has biased composition (pro residues).

Heterodimer with other HLH proteins.

It localises to the nucleus. Transcriptional regulator (lacking a basic DNA binding domain) which negatively regulates the basic helix-loop-helix (bHLH) transcription factors by forming heterodimers and inhibiting their DNA binding and transcriptional activity. Implicated in regulating a variety of cellular processes, including cellular growth, senescence, differentiation, apoptosis, angiogenesis, and neoplastic transformation. This is DNA-binding protein inhibitor ID-4 (ID4) from Sus scrofa (Pig).